The sequence spans 437 residues: O-methyltransferase 10 (437 aa).

S-adenosyl-L-methionine-binding residues include glycine 259, glutamate 282, asparagine 315, and methionine 316. Histidine 335 acts as the Proton acceptor in catalysis.

This sequence belongs to the class I-like SAM-binding methyltransferase superfamily. Cation-independent O-methyltransferase family. COMT subfamily.

The enzyme catalyses (3,5-dichloro-2,4,6-trihydroxyphenyl)hexan-1-one + S-adenosyl-L-methionine = 1-(3,5-dichloro-2,6-dihydroxy-4-methoxyphenyl)hexan-1-one + S-adenosyl-L-homocysteine + H(+). This Dictyostelium discoideum (Social amoeba) protein is O-methyltransferase 10 (omt10).